We begin with the raw amino-acid sequence, 470 residues long: Chitin deacetylase 1 (470 aa).

The N-terminal stretch at 1–19 (MFTFAAFSALLISLAGVVA) is a signal peptide. Residues N101 and N121 are each glycosylated (N-linked (GlcNAc...) asparagine). A disulfide bond links C155 and C363. One can recognise a NodB homology domain in the interval 159–358 (NVWGLSYDDG…VLANGTYQLK (200 aa)). The active-site Proton acceptor is the D166. D166 serves as a coordination point for acetate. Co(2+)-binding residues include D167, H216, and H220. Y257 provides a ligand contact to acetate. H331 functions as the Proton donor in the catalytic mechanism. 3 N-linked (GlcNAc...) asparagine glycosylation sites follow: N352, N378, and N440. The interval 406-447 (EVSAPSEATGSTAAGSAASTTSGSGASASTGAASNTSSSGSG) is disordered. A compositionally biased stretch (low complexity) spans 408-447 (SAPSEATGSTAAGSAASTTSGSGASASTGAASNTSSSGSG). S444 carries GPI-anchor amidated serine lipidation. Residues 445 to 470 (GSGRSATMGGALIALAAVAVGMVYVA) constitute a propeptide, removed in mature form.

The protein belongs to the polysaccharide deacetylase family. It depends on Co(2+) as a cofactor.

The protein localises to the secreted. Its subcellular location is the cell wall. It is found in the cell membrane. The enzyme catalyses [(1-&gt;4)-N-acetyl-beta-D-glucosaminyl](n) + n H2O = chitosan + n acetate. In terms of biological role, hydrolyzes the N-acetamido groups of N-acetyl-D-glucosamine residues in chitin to form chitosan and acetate. Chitosan is required to anchor melanin to the cell wall, for maintenance of cell wall integrity, and for proper cytokinesis. Plays a major role in synthesizing cell wall chitosan during host infection; chitosan offers an advantage during infection as it is less readily detected than chitin by host immunosurveillance mechanisms. This chain is Chitin deacetylase 1, found in Cryptococcus neoformans var. grubii serotype A (strain H99 / ATCC 208821 / CBS 10515 / FGSC 9487) (Filobasidiella neoformans var. grubii).